The primary structure comprises 208 residues: Attacin-A (208 aa).

Residues 1 to 20 (MQSFKICFFISCLSVVLVKG) form the signal peptide. The propeptide occupies 21-47 (QFGGTVSSNPNGGLDVNARLSKTIGDP).

As to expression, hemolymph and fat body.

Its subcellular location is the secreted. In terms of biological role, hemolymph antibacterial protein against Gram-negative bacteria. This chain is Attacin-A, found in Glossina morsitans morsitans (Savannah tsetse fly).